The following is a 463-amino-acid chain: Methionine aminopeptidase 2-1 (463 aa).

Residues 1 to 12 show a composition bias toward basic and acidic residues; it reads MGSKTPDGHRQG. Positions 1–96 are disordered; it reads MGSKTPDGHR…SGQQTTPPRV (96 aa). Positions 41–53 are enriched in acidic residues; sequence SGEDDEDGDDDEE. The span at 58-67 shows a compositional bias: polar residues; the sequence is DLNSRAQPNN. Residues 70 to 85 show a composition bias toward basic residues; that stretch reads KKRKRKNNKKKKKKRP. H215 serves as a coordination point for substrate. A divalent metal cation is bound by residues D236, D247, and H316. Position 324 (H324) interacts with substrate. A divalent metal cation is bound by residues E349 and E444.

The protein belongs to the peptidase M24A family. Methionine aminopeptidase eukaryotic type 2 subfamily. Requires Co(2+) as cofactor. The cofactor is Zn(2+). Mn(2+) serves as cofactor. Fe(2+) is required as a cofactor.

The protein resides in the cytoplasm. It catalyses the reaction Release of N-terminal amino acids, preferentially methionine, from peptides and arylamides.. In terms of biological role, cotranslationally removes the N-terminal methionine from nascent proteins. The N-terminal methionine is often cleaved when the second residue in the primary sequence is small and uncharged (Met-Ala-, Cys, Gly, Pro, Ser, Thr, or Val). This chain is Methionine aminopeptidase 2-1, found in Arthroderma otae (strain ATCC MYA-4605 / CBS 113480) (Microsporum canis).